Here is a 496-residue protein sequence, read N- to C-terminus: Zinc finger protein PLAGL2 (496 aa).

6 consecutive C2H2-type zinc fingers follow at residues 68–92 (YSCPQLHCGKAFASKYKLYRHMATH), 98–120 (HQCMYCDKMFHRKDHLRNHLQTH), 127–149 (LHCSECGKNYNTKLGYRRHLAMH), 156–178 (LSCKVCLQTFESTQALLEHLKAH), 191–213 (HPCDHCDRRFYTRKDVRRHLVVH), and 219–242 (FLCQYCAQRFGRKDHLTRHVKKSH).

This sequence belongs to the krueppel C2H2-type zinc-finger protein family.

The protein localises to the nucleus. Functionally, shows weak transcriptional activatory activity. The chain is Zinc finger protein PLAGL2 (PLAGL2) from Homo sapiens (Human).